A 1025-amino-acid polypeptide reads, in one-letter code: Retinoblastoma-related protein (1025 aa).

The interval 1–20 (MEDHPPKPSIPTADASLSNH) is disordered. The tract at residues 422 to 623 (TPVTTAMTTA…EKGSSMYNSL (202 aa)) is domain A. Residues 422-875 (TPVTTAMTTA…NEIFIPAVKP (454 aa)) are pocket. The interval 624–744 (TVARPALSAE…PGAGGETCAE (121 aa)) is spacer. Residues 745 to 875 (TAINVFFSKI…NEIFIPAVKP (131 aa)) form a domain B region.

It belongs to the retinoblastoma protein (RB) family.

The protein localises to the nucleus. In terms of biological role, regulator of biological processes that recruits a histone deacetylase to control gene transcription. May play a role in the entry into mitosis, negatively regulating the cell proliferation. Formation of stable complexes with geminiviridae replication-associated proteins may create a cellular environment which favors viral DNA replication. In Camellia sinensis (Tea plant), this protein is Retinoblastoma-related protein (pRB).